We begin with the raw amino-acid sequence, 274 residues long: Shikimate dehydrogenase (NADP(+)) (274 aa).

Shikimate contacts are provided by residues serine 14–serine 16 and threonine 61. Lysine 65 (proton acceptor) is an active-site residue. Asparagine 86 and aspartate 102 together coordinate shikimate. NADP(+) is bound by residues glycine 128 to alanine 132, asparagine 151 to lysine 156, and leucine 215. Tyrosine 217 is a binding site for shikimate. Residue glycine 239 participates in NADP(+) binding.

This sequence belongs to the shikimate dehydrogenase family. In terms of assembly, homodimer.

The catalysed reaction is shikimate + NADP(+) = 3-dehydroshikimate + NADPH + H(+). Its pathway is metabolic intermediate biosynthesis; chorismate biosynthesis; chorismate from D-erythrose 4-phosphate and phosphoenolpyruvate: step 4/7. Functionally, involved in the biosynthesis of the chorismate, which leads to the biosynthesis of aromatic amino acids. Catalyzes the reversible NADPH linked reduction of 3-dehydroshikimate (DHSA) to yield shikimate (SA). This chain is Shikimate dehydrogenase (NADP(+)), found in Proteus mirabilis (strain HI4320).